The following is a 71-amino-acid chain: Heat-stable enterotoxin B (71 aa).

Positions 1–19 (MKKIILALVLMLFSFCTLG) are cleaved as a signal peptide. A propeptide spanning residues 20–52 (QETASMHLDDTLSAPIAAEINRKACDTQTPSPS) is cleaved from the precursor. 3 disulfide bridges follow: Cys59–Cys64, Cys60–Cys68, and Cys63–Cys71.

The protein belongs to the heat-stable enterotoxin family.

The protein resides in the secreted. Its function is as follows. Toxin which activates the particulate form of guanylate cyclase and increases cyclic GMP levels within the host intestinal epithelial cells. Could play an important role in pathogenesis. The sequence is that of Heat-stable enterotoxin B (ystB) from Yersinia enterocolitica.